The sequence spans 2669 residues: Nucleosome-remodeling factor subunit NURF301 (2669 aa).

Residues 1–12 (MSGRGSRKRGRP) show a composition bias toward basic residues. Residues 1-121 (MSGRGSRKRG…EEDKSDNEDD (121 aa)) form a required for function in nucleosome sliding region. The tract at residues 1-125 (MSGRGSRKRG…SDNEDDMLLT (125 aa)) is disordered. The a.T hook DNA-binding region spans 6–18 (SRKRGRPPKTPNE). Positions 38–56 (GKSQPSTPSASRGISPQSD) are enriched in polar residues. Serine 40, serine 52, serine 55, serine 59, and serine 62 each carry phosphoserine. Basic residues predominate over residues 66–82 (HTNRSRGSAAKRGRGRK). A compositionally biased stretch (acidic residues) spans 109-125 (GDSEEDKSDNEDDMLLT). Positions 188-248 (NTHVLRALSI…LKAILREEDA (61 aa)) constitute a DDT domain. Residues 339-386 (DDHCRVCHRLGDLLCCETCPAVYHLECVDPPMNDVPTEDWQCGLCRSH) form a PHD-type 1 zinc finger. A coiled-coil region spans residues 460–515 (RLHSQITERRDEIERQMKLTETLTNEHKHTKRSVIEIEQEAKNELLEKEVLDEDEK). The interval 505–538 (LEKEVLDEDEKDGDAKSESQSIEGTKKQEECKMV) is disordered. The segment covering 528–537 (GTKKQEECKM) has biased composition (basic and acidic residues). Positions 688–720 (LQRITSAEREERKKLEKREKRERDDEEERNRLA) form a coiled coil. Disordered regions lie at residues 1026–1048 (EGKRESTQVAVDDSEEGKPAESE), 1135–1159 (TGLNSGNAEDVDMTPGWRRKRNQKS), and 1406–1425 (RSGLRKRKRAESPQPTEPQI). The residue at position 1417 (serine 1417) is a Phosphoserine. Position 1527 is a phosphothreonine (threonine 1527). The span at 1559 to 1590 (SRTGGANTAAAAASPTVGGSTSTQSNPSTSTP) shows a compositional bias: low complexity. Disordered stretches follow at residues 1559 to 1596 (SRTGGANTAAAAASPTVGGSTSTQSNPSTSTPHKVQII), 2181 to 2203 (INNGDDQENSKCAETENSNITTN), and 2283 to 2307 (TNEWETCSRGSVNEEALTPSRQTDD). The span at 2283–2293 (TNEWETCSRGS) shows a compositional bias: polar residues. Residues 2338 to 2373 (KNDEVAELGEQKQSQLERHKELLKKNILRKRSLLER) adopt a coiled-coil conformation. Residues 2382–2432 (DVKTKVQRHVRPLSNASPDEQSENERSGEPNLDFKRTEVQNPRHGAGRPKK) form a disordered region. Phosphoserine is present on residues serine 2395, serine 2398, and serine 2403. Residues 2404-2419 (ENERSGEPNLDFKRTE) are compositionally biased toward basic and acidic residues. Residues 2481-2546 (EFICIDCKRA…EYVCPECQRK (66 aa)) form a PHD-type 2 zinc finger. Residues 2556–2660 (KLTSNDVEEL…SYFVQKIKNF (105 aa)) enclose the Bromo domain.

Belongs to the BPTF family. As to quaternary structure, component of the NURF complex composed of Caf1-55, E(bx), Nurf-38 and Iswi. Interacts with Trl. Interacts with histone H3-K4Me3.

It localises to the nucleus. Histone-binding component of NURF (nucleosome remodeling factor), a complex which catalyzes ATP-dependent nucleosome sliding and facilitates transcription of chromatin. Specifically recognizes H3 tails trimethylated on 'Lys-4' (H3K4me3), which mark transcription start sites of virtually all active genes. Required for homeotic gene expression, proper larval blood cell development, normal male X chromosome morphology, ecdysteroid signaling and metamorphosis. The chain is Nucleosome-remodeling factor subunit NURF301 (E(bx)) from Drosophila melanogaster (Fruit fly).